A 1892-amino-acid chain; its full sequence is Alpha-2-macroglobulin (1892 aa).

The signal sequence occupies residues 1–23; that stretch reads MKNIFRKFVFTIFVCLINLQLIA. A cross-link (isoglutamyl cysteine thioester (Cys-Gln)) is located at residues 1441–1444; it reads CTEQ.

This sequence belongs to the protease inhibitor I39 (alpha-2-macroglobulin) family. Bacterial alpha-2-macroglobulin subfamily.

Its function is as follows. Protects the bacterial cell from host peptidases. In Rickettsia conorii (strain ATCC VR-613 / Malish 7), this protein is Alpha-2-macroglobulin.